A 116-amino-acid polypeptide reads, in one-letter code: Ribosome-binding factor A (116 aa).

The protein belongs to the RbfA family. As to quaternary structure, monomer. Binds 30S ribosomal subunits, but not 50S ribosomal subunits or 70S ribosomes.

It localises to the cytoplasm. One of several proteins that assist in the late maturation steps of the functional core of the 30S ribosomal subunit. Associates with free 30S ribosomal subunits (but not with 30S subunits that are part of 70S ribosomes or polysomes). Required for efficient processing of 16S rRNA. May interact with the 5'-terminal helix region of 16S rRNA. The sequence is that of Ribosome-binding factor A from Staphylococcus epidermidis (strain ATCC 35984 / DSM 28319 / BCRC 17069 / CCUG 31568 / BM 3577 / RP62A).